The sequence spans 550 residues: Hydroxylamine reductase (550 aa).

4 residues coordinate [2Fe-2S] cluster: C3, C6, C18, and C25. Hybrid [4Fe-2O-2S] cluster-binding residues include H249, E273, C317, C405, C433, C458, E492, and K494. The residue at position 405 (C405) is a Cysteine persulfide.

The protein belongs to the HCP family. [2Fe-2S] cluster serves as cofactor. It depends on hybrid [4Fe-2O-2S] cluster as a cofactor.

It is found in the cytoplasm. It carries out the reaction A + NH4(+) + H2O = hydroxylamine + AH2 + H(+). In terms of biological role, catalyzes the reduction of hydroxylamine to form NH(3) and H(2)O. The chain is Hydroxylamine reductase from Salmonella enteritidis PT4 (strain P125109).